A 98-amino-acid chain; its full sequence is NADH-ubiquinone oxidoreductase chain 4L (98 aa).

The next 3 helical transmembrane spans lie at 1–21 (MTSI…GVLV), 28–48 (STLL…ALLI), and 59–79 (APLI…ALLV).

The protein belongs to the complex I subunit 4L family. Core subunit of respiratory chain NADH dehydrogenase (Complex I) which is composed of 45 different subunits.

Its subcellular location is the mitochondrion inner membrane. It catalyses the reaction a ubiquinone + NADH + 5 H(+)(in) = a ubiquinol + NAD(+) + 4 H(+)(out). Core subunit of the mitochondrial membrane respiratory chain NADH dehydrogenase (Complex I) which catalyzes electron transfer from NADH through the respiratory chain, using ubiquinone as an electron acceptor. Part of the enzyme membrane arm which is embedded in the lipid bilayer and involved in proton translocation. This is NADH-ubiquinone oxidoreductase chain 4L (MT-ND4L) from Dactylopsila trivirgata (Striped possum).